The primary structure comprises 374 residues: Putative glutamate--cysteine ligase 2 (374 aa).

The protein belongs to the glutamate--cysteine ligase type 2 family. YbdK subfamily.

The catalysed reaction is L-cysteine + L-glutamate + ATP = gamma-L-glutamyl-L-cysteine + ADP + phosphate + H(+). Its function is as follows. ATP-dependent carboxylate-amine ligase which exhibits weak glutamate--cysteine ligase activity. The sequence is that of Putative glutamate--cysteine ligase 2 from Acidovorax ebreus (strain TPSY) (Diaphorobacter sp. (strain TPSY)).